We begin with the raw amino-acid sequence, 88 residues long: Small ribosomal subunit protein uS15c (88 aa).

Belongs to the universal ribosomal protein uS15 family. As to quaternary structure, part of the 30S ribosomal subunit.

It localises to the plastid. It is found in the chloroplast. This chain is Small ribosomal subunit protein uS15c (rps15), found in Nasturtium officinale (Watercress).